The sequence spans 204 residues: Holliday junction branch migration complex subunit RuvA (204 aa).

Residues 1–64 (MIAKLTGILD…ETDQRLIGFT (64 aa)) are domain I. Positions 65 to 143 (SAGERAWFRL…GLAGYASPVG (79 aa)) are domain II. The flexible linker stretch occupies residues 144 to 154 (PGGEAFVAPPG). The segment at 154–204 (GNASADAVSALQNLGFKPAVASSAVAAAVKELGEDAGLNDLVRVALKRAAG) is domain III.

Belongs to the RuvA family. As to quaternary structure, homotetramer. Forms an RuvA(8)-RuvB(12)-Holliday junction (HJ) complex. HJ DNA is sandwiched between 2 RuvA tetramers; dsDNA enters through RuvA and exits via RuvB. An RuvB hexamer assembles on each DNA strand where it exits the tetramer. Each RuvB hexamer is contacted by two RuvA subunits (via domain III) on 2 adjacent RuvB subunits; this complex drives branch migration. In the full resolvosome a probable DNA-RuvA(4)-RuvB(12)-RuvC(2) complex forms which resolves the HJ.

It is found in the cytoplasm. Functionally, the RuvA-RuvB-RuvC complex processes Holliday junction (HJ) DNA during genetic recombination and DNA repair, while the RuvA-RuvB complex plays an important role in the rescue of blocked DNA replication forks via replication fork reversal (RFR). RuvA specifically binds to HJ cruciform DNA, conferring on it an open structure. The RuvB hexamer acts as an ATP-dependent pump, pulling dsDNA into and through the RuvAB complex. HJ branch migration allows RuvC to scan DNA until it finds its consensus sequence, where it cleaves and resolves the cruciform DNA. This chain is Holliday junction branch migration complex subunit RuvA, found in Novosphingobium aromaticivorans (strain ATCC 700278 / DSM 12444 / CCUG 56034 / CIP 105152 / NBRC 16084 / F199).